Consider the following 165-residue polypeptide: Ubiquitin-like protein ISG15 (165 aa).

Ubiquitin-like domains lie at 2 to 78 and 79 to 157; these read GWDL…VDKC and DEPL…LRGG. S-nitrosocysteine; alternate is present on Cys-78. The LRLRGG motif lies at 152 to 157; that stretch reads LRLRGG. The tract at residues 153 to 157 is involved in the ligation of specific target proteins; sequence RLRGG. Gly-157 participates in a covalent cross-link: Glycyl lysine isopeptide (Gly-Lys) (interchain with K-? in acceptor proteins). A propeptide spans 158–165 (removed in mature form); sequence GTEPGGRS.

In terms of assembly, homodimer; disulfide-linked. Interacts with, and is conjugated to its targets by UBE1L (E1 enzyme) and UBE2E2 (E2 enzyme). Interacts with NEDD4. Interacts with PARP12; this interaction inhibits PINK1/Parkin-dependent mitophagy. (Microbial infection) Interacts with vaccinia virus protein E3. As to quaternary structure, (Microbial infection) Interaction with influenza B NS1 protein inhibits its conjugation. In terms of assembly, (Microbial infection) Interacts (via C-terminus) with Crimean-Congo hemorrhagic fever virus (CCHFV) RNA-directed RNA polymerase L (via N-terminus); the deISGylase activity of the viral protein interferes with antiviral signaling pathways mediated by NF-kappaB and IRF signalings. (Microbial infection) Interacts with human cytomegalovirus protein UL26; this interaction inhibits global protein ISGylation. S-nitrosylation decreases its dimerization, thereby increasing the availability as well as the solubility of monomeric ISG15 for its conjugation to cellular proteins. Post-translationally, induced as an inactive, precursor protein that is cleaved by specific proteases to expose the C-terminal diglycine (LRLRGG) motif. This motif is essential not only for its conjugation to substrates but also for its recognition by the relevant processing proteases. In terms of tissue distribution, detected in lymphoid cells, striated and smooth muscle, several epithelia and neurons. Expressed in neutrophils, monocytes and lymphocytes. Enhanced expression seen in pancreatic adenocarcinoma, endometrial cancer, and bladder cancer, as compared to non-cancerous tissue. In bladder cancer, the increase in expression exhibits a striking positive correlation with more advanced stages of the disease.

It is found in the cytoplasm. The protein resides in the secreted. Its function is as follows. Ubiquitin-like protein which plays a key role in the innate immune response to viral infection either via its conjugation to a target protein (ISGylation) or via its action as a free or unconjugated protein. ISGylation involves a cascade of enzymatic reactions involving E1, E2, and E3 enzymes which catalyze the conjugation of ISG15 to a lysine residue in the target protein. Its target proteins include IFIT1, MX1/MxA, PPM1B, UBE2L6, UBA7, CHMP5, CHMP2A, CHMP4B and CHMP6. Isgylation of the viral sensor IFIH1/MDA5 promotes IFIH1/MDA5 oligomerization and triggers activation of innate immunity against a range of viruses, including coronaviruses, flaviviruses and picornaviruses. Can also isgylate: EIF2AK2/PKR which results in its activation, RIGI which inhibits its function in antiviral signaling response, EIF4E2 which enhances its cap structure-binding activity and translation-inhibition activity, UBE2N and UBE2E1 which negatively regulates their activity, IRF3 which inhibits its ubiquitination and degradation and FLNB which prevents its ability to interact with the upstream activators of the JNK cascade thereby inhibiting IFNA-induced JNK signaling. Exhibits antiviral activity towards both DNA and RNA viruses, including influenza A, HIV-1 and Ebola virus. Restricts HIV-1 and ebola virus via disruption of viral budding. Inhibits the ubiquitination of HIV-1 Gag and host TSG101 and disrupts their interaction, thereby preventing assembly and release of virions from infected cells. Inhibits Ebola virus budding mediated by the VP40 protein by disrupting ubiquitin ligase activity of NEDD4 and its ability to ubiquitinate VP40. ISGylates influenza A virus NS1 protein which causes a loss of function of the protein and the inhibition of virus replication. The secreted form of ISG15 can: induce natural killer cell proliferation, act as a chemotactic factor for neutrophils and act as a IFN-gamma-inducing cytokine playing an essential role in antimycobacterial immunity. The secreted form acts through the integrin ITGAL/ITGB2 receptor to initiate activation of SRC family tyrosine kinases including LYN, HCK and FGR which leads to secretion of IFNG and IL10; the interaction is mediated by ITGAL. The polypeptide is Ubiquitin-like protein ISG15 (Homo sapiens (Human)).